The following is a 565-amino-acid chain: uncharacterized protein (565 aa).

5 helical membrane passes run 4–26, 33–55, 68–90, 97–119, and 162–184; these read FVQF…AVWV, GYGL…VGAA, SLLY…VNAL, YAIL…TQFF, and ISAM…IILL. 2 consecutive RCK C-terminal domains span residues 210-295 and 296-379; these read PNVD…LGPE and VPDA…IFGV. The next 5 membrane-spanning stretches (helical) occupy residues 389-411, 415-432, 453-472, 482-504, and 539-561; these read LLTL…PAFG, GLGN…VSSI, LGLI…DLLT, IFIV…GFHI, and WLGF…YFAM.

This sequence belongs to the AAE transporter (TC 2.A.81) family.

It is found in the cell membrane. This is an uncharacterized protein from Bordetella parapertussis (strain 12822 / ATCC BAA-587 / NCTC 13253).